The sequence spans 111 residues: MSAQGQALQNHNNELVKCIEDLREKREEIIKQLREDDAEKAKITQELQILTKRLAQVNESIARKTETKNEYDKVISETEAAYLKILESSQTLLTVLKREAVNIAKKKQASS.

Positions 6 to 71 (QALQNHNNEL…ARKTETKNEY (66 aa)) form a coiled coil.

It belongs to the SSNA1 family. In terms of assembly, self-assembles into fibrils in a head-to-tail fashion.

Its subcellular location is the cytoplasm. The protein resides in the cytoskeleton. It is found in the flagellum basal body. The protein localises to the flagellum axoneme. In terms of biological role, microtubule-binding protein which stabilizes dynamic microtubules by slowing growth and shrinkage at both plus and minus ends and serves as a sensor of microtubule damage. Induces microtubule branching which is mediated by the formation of long SSNA1 fibrils which guide microtubule protofilaments to split apart from the mother microtubule and form daughter microtubules. Required for cell division. The chain is Microtubule nucleation factor SSNA1 from Chlamydomonas reinhardtii (Chlamydomonas smithii).